We begin with the raw amino-acid sequence, 231 residues long: tRNA (guanine-N(1)-)-methyltransferase (231 aa).

S-adenosyl-L-methionine is bound at residue G112.

This sequence belongs to the RNA methyltransferase TrmD family. Homodimer.

The protein resides in the cytoplasm. It catalyses the reaction guanosine(37) in tRNA + S-adenosyl-L-methionine = N(1)-methylguanosine(37) in tRNA + S-adenosyl-L-homocysteine + H(+). Specifically methylates guanosine-37 in various tRNAs. The sequence is that of tRNA (guanine-N(1)-)-methyltransferase from Chlorobium chlorochromatii (strain CaD3).